The sequence spans 471 residues: Uronate isomerase (471 aa).

Belongs to the metallo-dependent hydrolases superfamily. Uronate isomerase family.

It catalyses the reaction D-glucuronate = D-fructuronate. The catalysed reaction is aldehydo-D-galacturonate = keto-D-tagaturonate. Its pathway is carbohydrate metabolism; pentose and glucuronate interconversion. This Cellvibrio japonicus (strain Ueda107) (Pseudomonas fluorescens subsp. cellulosa) protein is Uronate isomerase.